The chain runs to 437 residues: Protein WVD2-like 5 (437 aa).

Disordered stretches follow at residues 1 to 22 (MDPESIMAADGTDSAPANGGLA), 38 to 210 (TVDT…FSFK), and 254 to 437 (LRKS…AVEH). The segment covering 41 to 55 (TTSESQNENSANSST) has biased composition (low complexity). A compositionally biased stretch (basic and acidic residues) spans 58 to 86 (TIEHVKEAAEGTQVEHVDDSKCMKGEKAQ). The span at 121-140 (SNGSVAPNVQTTNPLKSKSF) shows a compositional bias: polar residues. Basic and acidic residues predominate over residues 151–167 (GKHDSAPAESADGEKVK). Ser208 is subject to Phosphoserine. Positions 288-297 (KSPKLGRKKT) are enriched in basic residues. A compositionally biased stretch (low complexity) spans 360–371 (PAPAKAAIIPAK). Basic and acidic residues predominate over residues 408–437 (EDSHETVSPRMNEDRADKSIEVSEAVAVEH). Ser415 bears the Phosphoserine mark.

It belongs to the TPX2 family. As to expression, expressed in seedlings.

The protein resides in the cytoplasm. It localises to the cytoskeleton. In terms of biological role, microtubule-associated protein (MAP) that regulates the orientation of interphase cortical microtubules. This chain is Protein WVD2-like 5, found in Arabidopsis thaliana (Mouse-ear cress).